A 169-amino-acid polypeptide reads, in one-letter code: Glycine-rich RNA-binding protein 10 (169 aa).

One can recognise an RRM domain in the interval 6-84 (YRCFVGGLAW…RTITVNEAQS (79 aa)). 2 disordered regions span residues 80–101 (NEAQ…YGGR) and 121–169 (GYGS…GGGW). Over residues 85 to 101 (RGGGGGGGRGGGGYGGR) the composition is skewed to gly residues.

In terms of tissue distribution, expressed only in roots and stems.

Its function is as follows. Possibly has a role in RNA transcription or processing during stress. The polypeptide is Glycine-rich RNA-binding protein 10 (GRP10) (Brassica napus (Rape)).